Here is a 724-residue protein sequence, read N- to C-terminus: RINT1-like protein (724 aa).

Positions 163–724 (RLHAVQAQSL…LERRMDIKMF (562 aa)) constitute an RINT1/TIP20 domain.

Belongs to the RINT1 family.

In terms of biological role, during cytokinesis in male meiotic cells, required for completion of cleavage furrow ingression possibly in conjunction with Zw10. Required for maintenance of Golgi stack number and morphology. Essential for acroblast assembly. The sequence is that of RINT1-like protein from Drosophila melanogaster (Fruit fly).